The following is a 253-amino-acid chain: 5-oxoprolinase subunit A (253 aa).

This sequence belongs to the LamB/PxpA family. In terms of assembly, forms a complex composed of PxpA, PxpB and PxpC.

It catalyses the reaction 5-oxo-L-proline + ATP + 2 H2O = L-glutamate + ADP + phosphate + H(+). Functionally, catalyzes the cleavage of 5-oxoproline to form L-glutamate coupled to the hydrolysis of ATP to ADP and inorganic phosphate. The chain is 5-oxoprolinase subunit A from Bacillus thuringiensis subsp. konkukian (strain 97-27).